Here is a 346-residue protein sequence, read N- to C-terminus: DNA-directed RNA polymerases I and III subunit RPAC1 (346 aa).

Alanine 2 carries the post-translational modification N-acetylalanine. Serine 4 is modified (phosphoserine).

It belongs to the archaeal Rpo3/eukaryotic RPB3 RNA polymerase subunit family. In terms of assembly, component of the RNA polymerase I and RNA polymerase III complexes consisting of at least 13 and 17 subunits, respectively. Pol I complex consists of a ten-subunit catalytic core composed of POLR1A/RPA1, POLR1B/RPA2, POLR1C/RPAC1, POLR1D/RPAC2, POLR1H/RPA12, POLR2E/RPABC1, POLR2F/RPABC2, POLR2H/RPABC3, POLR2K/RPABC4 and POLR2L/RPABC5; a mobile stalk subunit POLR1F/RPA43 protruding from the core and additional subunits homologous to general transcription factors POLR1E/RPA49 and POLR1G/RPA34. Part of Pol I pre-initiation complex (PIC), in which Pol I core assembles with RRN3 and promoter-bound UTBF and SL1/TIF-IB complex. Pol III complex consists of a ten-subunit catalytic core composed of POLR3A/RPC1, POLR3B/RPC2, POLR1C/RPAC1, POLR1D/RPAC2, POLR3K/RPC10, POLR2E/RPABC1, POLR2F/RPABC2, POLR2H/RPABC3, POLR2K/RPABC4 and POLR2L/RPABC5; a mobile stalk composed of two subunits POLR3H/RPC8 and CRCP/RPC9, protruding from the core and functioning primarily in transcription initiation; and additional subunits homologous to general transcription factors of the RNA polymerase II machinery, POLR3C/RPC3-POLR3F/RPC6-POLR3G/RPC7 heterotrimer required for transcription initiation and POLR3D/RPC4-POLR3E/RPC5 heterodimer involved in both transcription initiation and termination.

It is found in the nucleus. It localises to the nucleolus. Its subcellular location is the cytoplasm. The protein resides in the cytosol. In terms of biological role, DNA-dependent RNA polymerase catalyzes the transcription of DNA into RNA using the four ribonucleoside triphosphates as substrates. Common component of RNA polymerases I and III which synthesize ribosomal RNA precursors and short non-coding RNAs including 5S rRNA, snRNAs, tRNAs and miRNAs, respectively. POLR1C/RPAC1 is part of the polymerase core and may function as a clamp element that moves to open and close the cleft. The protein is DNA-directed RNA polymerases I and III subunit RPAC1 of Homo sapiens (Human).